Consider the following 377-residue polypeptide: Flagellin D (377 aa).

Coiled-coil stretches lie at residues 103–129 (SNSK…IAET) and 310–339 (AFQN…IKDT).

It belongs to the bacterial flagellin family. In terms of assembly, heteromer of multiple flagellin subunits including FlaA, FlaB, FlaC, FlaD and FlaE.

The protein resides in the secreted. Its subcellular location is the bacterial flagellum. Flagellin is the subunit protein which polymerizes to form the filaments of bacterial flagella. FlaD is not essential for flagellar synthesis and motility. The chain is Flagellin D (flaD) from Vibrio cholerae serotype O1 (strain ATCC 39315 / El Tor Inaba N16961).